The following is a 538-amino-acid chain: Phosphoenolpyruvate carboxykinase (ATP) (538 aa).

The substrate site is built by Arg61, Tyr195, and Lys201. ATP-binding positions include Lys201, His220, and 236–244 (GLSGTGKTT). Residues Lys201 and His220 each contribute to the Mn(2+) site. Mn(2+) is bound at residue Asp257. ATP is bound by residues Glu285, Arg323, and Thr449. Substrate is bound at residue Arg323.

This sequence belongs to the phosphoenolpyruvate carboxykinase (ATP) family. The cofactor is Mn(2+).

It is found in the cytoplasm. It catalyses the reaction oxaloacetate + ATP = phosphoenolpyruvate + ADP + CO2. It functions in the pathway carbohydrate biosynthesis; gluconeogenesis. Its function is as follows. Involved in the gluconeogenesis. Catalyzes the conversion of oxaloacetate (OAA) to phosphoenolpyruvate (PEP) through direct phosphoryl transfer between the nucleoside triphosphate and OAA. The sequence is that of Phosphoenolpyruvate carboxykinase (ATP) from Nitrobacter winogradskyi (strain ATCC 25391 / DSM 10237 / CIP 104748 / NCIMB 11846 / Nb-255).